The sequence spans 497 residues: MPFDPLLFAQNTVILPEIIVIVCLLIVLVLDLIQENSAWLSTISLTGLVAATIALVFQWNHPSANDFLGSIQVDNFTISFRGIITISSALSILISTEYIKRAGMGLAECLIFILTATVGGLFLCGANNLVTVFVSLECLSLSSYLLVGYAKKDVRSNEASMKYLLMGGASSSIIAYGFSWLYGLSGGEIELSKLVDGITNHIDEPIAVWVALACVVVGIGFKLSAFPFHQWTPDVYEGSPTPVVAFFSVGSKAAALALATRMLSIVFPSIESEWHVLLELLALLSMIFGNLIAATQTSMKRMLAYSSISQAGYLIIGIVCGNIYGYTGMITYMVTYIFMNLGAFGCVILFGLRTGTDQIRDYTGLYLKDPLLAFCLSVCLLSLAGIPPLAGFFGKLYLFWCGWKSGLYLLVYVALITSVISMYYYLRVVKSMFTRETKEQSSYVRNYLAPSLSLLPTTSIEVGIALCVFISTTLGFVINPIISATSETLLATNTIVG.

A run of 14 helical transmembrane segments spans residues 13–33 (VILP…LDLI), 37–57 (SAWL…ALVF), 76–96 (FTIS…LIST), 103–123 (GMGL…GLFL), 129–149 (LVTV…LVGY), 164–184 (LLMG…LYGL), 206–226 (IAVW…LSAF), 240–260 (PTPV…ALAT), 274–294 (WHVL…LIAA), 311–331 (AGYL…GMIT), 332–352 (YMVT…LFGL), 373–393 (AFCL…AGFF), 406–426 (GLYL…YYYL), and 462–482 (VGIA…NPII).

Belongs to the complex I subunit 2 family. In terms of assembly, NDH is composed of at least 16 different subunits, 5 of which are encoded in the nucleus.

It is found in the plastid. The protein resides in the chloroplast thylakoid membrane. It catalyses the reaction a plastoquinone + NADH + (n+1) H(+)(in) = a plastoquinol + NAD(+) + n H(+)(out). It carries out the reaction a plastoquinone + NADPH + (n+1) H(+)(in) = a plastoquinol + NADP(+) + n H(+)(out). Functionally, NDH shuttles electrons from NAD(P)H:plastoquinone, via FMN and iron-sulfur (Fe-S) centers, to quinones in the photosynthetic chain and possibly in a chloroplast respiratory chain. The immediate electron acceptor for the enzyme in this species is believed to be plastoquinone. Couples the redox reaction to proton translocation, and thus conserves the redox energy in a proton gradient. The chain is NAD(P)H-quinone oxidoreductase subunit 2, chloroplastic from Zygnema circumcarinatum (Green alga).